An 868-amino-acid chain; its full sequence is DNA topoisomerase 1 (868 aa).

The Toprim domain maps to 3–147; it reads KSLVIVESPA…RYKRVVFNEI (145 aa). A Mg(2+)-binding site is contributed by E9. The interval 34-70 is disordered; sequence IRDLPTSGSSSSKEPAAKGRKSASEAPALSPKEKARR. Position 116 (D116) interacts with Mg(2+). One can recognise a Topo IA-type catalytic domain in the interval 163–580; that stretch reads DINRVNAQQA…EFYGDFKKKL (418 aa). Residues 197–202 form an interaction with DNA region; that stretch reads SAGRVQ. The active-site O-(5'-phospho-DNA)-tyrosine intermediate is the Y324. C4-type zinc fingers lie at residues 602–633, 664–691, and 713–738; these read CRECGRPMMIRTASTGVFLGCSGYSLPPKERC, CPICSTAMDAYLLDEKHKLHICGNNPDC, and CDKCGSEMQLKTGRFGKFFGCTNPTC.

It belongs to the type IA topoisomerase family. As to quaternary structure, monomer. The cofactor is Mg(2+).

It catalyses the reaction ATP-independent breakage of single-stranded DNA, followed by passage and rejoining.. Its function is as follows. Releases the supercoiling and torsional tension of DNA, which is introduced during the DNA replication and transcription, by transiently cleaving and rejoining one strand of the DNA duplex. Introduces a single-strand break via transesterification at a target site in duplex DNA. The scissile phosphodiester is attacked by the catalytic tyrosine of the enzyme, resulting in the formation of a DNA-(5'-phosphotyrosyl)-enzyme intermediate and the expulsion of a 3'-OH DNA strand. The free DNA strand then undergoes passage around the unbroken strand, thus removing DNA supercoils. Finally, in the religation step, the DNA 3'-OH attacks the covalent intermediate to expel the active-site tyrosine and restore the DNA phosphodiester backbone. The protein is DNA topoisomerase 1 of Pseudomonas aeruginosa (strain ATCC 15692 / DSM 22644 / CIP 104116 / JCM 14847 / LMG 12228 / 1C / PRS 101 / PAO1).